A 909-amino-acid polypeptide reads, in one-letter code: Protein translocase subunit SecA (909 aa).

Residues Gln-87, Gly-105–Thr-109, and Asp-507 contribute to the ATP site. Positions Asp-857–Asn-909 are disordered. Residues Glu-871–Arg-889 are compositionally biased toward basic and acidic residues. The Zn(2+) site is built by Cys-893, Cys-895, Cys-904, and His-905. The segment covering Lys-899–Asn-909 has biased composition (basic residues).

This sequence belongs to the SecA family. Monomer and homodimer. Part of the essential Sec protein translocation apparatus which comprises SecA, SecYEG and auxiliary proteins SecDF-YajC and YidC. The cofactor is Zn(2+).

The protein resides in the cell inner membrane. Its subcellular location is the cytoplasm. It carries out the reaction ATP + H2O + cellular proteinSide 1 = ADP + phosphate + cellular proteinSide 2.. Its function is as follows. Part of the Sec protein translocase complex. Interacts with the SecYEG preprotein conducting channel. Has a central role in coupling the hydrolysis of ATP to the transfer of proteins into and across the cell membrane, serving both as a receptor for the preprotein-SecB complex and as an ATP-driven molecular motor driving the stepwise translocation of polypeptide chains across the membrane. This is Protein translocase subunit SecA from Nitrosomonas europaea (strain ATCC 19718 / CIP 103999 / KCTC 2705 / NBRC 14298).